The chain runs to 297 residues: MMMQRTQLLLPLAMEATMLAQQQRGMATLKMISIRLKSVKNIQKITQSMKMVSAAKYARAERDLKAARPYGIGAQQFFEKTEIQPDEKAEPKKLLIAVTSDRGLCGAVHTGVARLIRGELAQDEANTKVFCVGDKSRAILSRLYGKNILMVANEVGRLPPTFLDASKIANEVLQTGYDYTEGKIVYNRFKSVVSYQCSTLPIFSGSTVEKSEKLAVYDSLDSDVVKSYLEFSLASLIFYTMKEGACSEQSSRMTAMDNASKNAGEMIDKLTLTFNRTRQAVITRELIEIISGAAALT.

It belongs to the ATPase gamma chain family. As to quaternary structure, F-type ATPases have 2 components, CF(1) - the catalytic core - and CF(0) - the membrane proton channel. CF(1) has five subunits: alpha(3), beta(3), gamma(1), delta(1), epsilon(1). CF(0) has three main subunits: a, b and c.

Its subcellular location is the mitochondrion. It localises to the mitochondrion inner membrane. Functionally, mitochondrial membrane ATP synthase (F(1)F(0) ATP synthase or Complex V) produces ATP from ADP in the presence of a proton gradient across the membrane which is generated by electron transport complexes of the respiratory chain. F-type ATPases consist of two structural domains, F(1) - containing the extramembraneous catalytic core, and F(0) - containing the membrane proton channel, linked together by a central stalk and a peripheral stalk. During catalysis, ATP synthesis in the catalytic domain of F(1) is coupled via a rotary mechanism of the central stalk subunits to proton translocation. Part of the complex F(1) domain and the central stalk which is part of the complex rotary element. The gamma subunit protrudes into the catalytic domain formed of alpha(3)beta(3). Rotation of the central stalk against the surrounding alpha(3)beta(3) subunits leads to hydrolysis of ATP in three separate catalytic sites on the beta subunits. In Drosophila melanogaster (Fruit fly), this protein is ATP synthase subunit gamma, mitochondrial.